Here is a 286-residue protein sequence, read N- to C-terminus: Prepilin leader peptidase/N-methyltransferase (286 aa).

The chain crosses the membrane as a helical span at residues L11 to I31. C74, C77, C99, and C102 together coordinate Zn(2+). 6 consecutive transmembrane segments (helical) span residues I106–F126, L132–A152, L161–L181, V185–I205, L231–L251, and M257–I277.

The protein belongs to the peptidase A24 family. Zn(2+) is required as a cofactor.

Its subcellular location is the cell inner membrane. The catalysed reaction is Typically cleaves a -Gly-|-Phe- bond to release an N-terminal, basic peptide of 5-8 residues from type IV prepilin, and then N-methylates the new N-terminal amino group, the methyl donor being S-adenosyl-L-methionine.. Its function is as follows. Plays an essential role in type IV pili and type II pseudopili formation by proteolytically removing the leader sequence from substrate proteins and subsequently monomethylating the alpha-amino group of the newly exposed N-terminal phenylalanine. This is Prepilin leader peptidase/N-methyltransferase (fimP) from Dichelobacter nodosus (Bacteroides nodosus).